A 95-amino-acid polypeptide reads, in one-letter code: Osteocalcin 1 (95 aa).

The N-terminal stretch at 1-21 (MKTLSVLVLCSLAVLCLTSDA) is a signal peptide. The propeptide occupies 22–50 (SFSSQPAVDTPAQEGLFVEQEQASSVVRQ). Positions 45-91 (SSVVRQAPKELSLSQLESLREVCELNLACEDMMDTSGIIAAYTTYYG) constitute a Gla domain. Ca(2+)-binding residues include Glu-61, Glu-65, and Glu-68. 4-carboxyglutamate occurs at positions 61, 65, and 68. Cys-67 and Cys-73 form a disulfide bridge.

The protein belongs to the osteocalcin/matrix Gla protein family. In terms of processing, gamma-carboxyglutamate residues are formed by vitamin K dependent carboxylation by GGCX. These residues are essential for the binding of calcium.

It is found in the secreted. In terms of biological role, the carboxylated form is one of the main organic components of the bone matrix, which constitutes 1-2% of the total bone protein. The carboxylated form binds strongly to apatite and calcium. The sequence is that of Osteocalcin 1 from Solea senegalensis (Senegalese sole).